A 1248-amino-acid chain; its full sequence is Cullin-associated NEDD8-dissociated protein 1 (1248 aa).

HEAT repeat units follow at residues 44–82, 127–165, 168–206, 365–403, 425–463, 510–548, 604–642, 644–682, 861–900, 976–1014, and 1054–1093; these read DESE…KVKE, PNVC…RFGE, VPFH…QANS, EDFY…NTRL, IEQL…SLPG, HPHI…VIRP, QNEL…LRID, TPIL…NYSS, DLSS…GSLQ, LVNP…DQPQ, and PSLV…TVDD.

The protein belongs to the CAND family.

Key assembly factor of SCF (SKP1-CUL1-F-box protein) E3 ubiquitin ligase complexes that promotes the exchange of the substrate-recognition F-box subunit in SCF complexes, thereby playing a key role in the cellular repertoire of SCF complexes. Acts as a F-box protein exchange factor. Probably plays a similar role in other cullin-RING E3 ubiquitin ligase complexes. The sequence is that of Cullin-associated NEDD8-dissociated protein 1 (Cand1) from Drosophila melanogaster (Fruit fly).